A 301-amino-acid chain; its full sequence is Sulfate adenylyltransferase subunit 2 (301 aa).

Belongs to the PAPS reductase family. CysD subfamily. Heterodimer composed of CysD, the smaller subunit, and CysN.

The catalysed reaction is sulfate + ATP + H(+) = adenosine 5'-phosphosulfate + diphosphate. It functions in the pathway sulfur metabolism; hydrogen sulfide biosynthesis; sulfite from sulfate: step 1/3. With CysN forms the ATP sulfurylase (ATPS) that catalyzes the adenylation of sulfate producing adenosine 5'-phosphosulfate (APS) and diphosphate, the first enzymatic step in sulfur assimilation pathway. APS synthesis involves the formation of a high-energy phosphoric-sulfuric acid anhydride bond driven by GTP hydrolysis by CysN coupled to ATP hydrolysis by CysD. In Shewanella loihica (strain ATCC BAA-1088 / PV-4), this protein is Sulfate adenylyltransferase subunit 2.